The primary structure comprises 486 residues: Probable transporter MCH1 (486 aa).

The next 12 membrane-spanning stretches (helical) occupy residues 31–51 (IFAL…FSMY), 68–88 (SVSI…GYLG), 95–115 (YLAL…SGIF), 135–155 (EMAL…YASL), 174–194 (TYTP…SSLW), 211–231 (VAGI…IIFF), 268–288 (FFTD…GGPF), 312–333 (FSTH…VGFS), 349–369 (VIAL…FTVF), 377–397 (VVTI…PTIV), 409–429 (IWGS…LLFA), and 457–477 (FVIT…IWVF).

The protein belongs to the major facilitator superfamily.

The protein localises to the vacuole membrane. Probable transporter. In Yarrowia lipolytica (strain CLIB 122 / E 150) (Yeast), this protein is Probable transporter MCH1 (MCH1).